A 52-amino-acid chain; its full sequence is DNA-directed RNA polymerase subunit Rpo12 (52 aa).

Zn(2+) is bound by residues cysteine 13, cysteine 30, and cysteine 33.

The protein belongs to the archaeal Rpo12/eukaryotic RPC10 RNA polymerase subunit family. In terms of assembly, part of the RNA polymerase complex. The cofactor is Zn(2+).

It localises to the cytoplasm. It catalyses the reaction RNA(n) + a ribonucleoside 5'-triphosphate = RNA(n+1) + diphosphate. DNA-dependent RNA polymerase (RNAP) catalyzes the transcription of DNA into RNA using the four ribonucleoside triphosphates as substrates. The sequence is that of DNA-directed RNA polymerase subunit Rpo12 from Pyrobaculum arsenaticum (strain DSM 13514 / JCM 11321 / PZ6).